A 368-amino-acid chain; its full sequence is 4-hydroxy-3-methylbut-2-en-1-yl diphosphate synthase (flavodoxin) (368 aa).

The [4Fe-4S] cluster site is built by cysteine 271, cysteine 274, cysteine 306, and glutamate 313.

It belongs to the IspG family. The cofactor is [4Fe-4S] cluster.

It carries out the reaction (2E)-4-hydroxy-3-methylbut-2-enyl diphosphate + oxidized [flavodoxin] + H2O + 2 H(+) = 2-C-methyl-D-erythritol 2,4-cyclic diphosphate + reduced [flavodoxin]. It functions in the pathway isoprenoid biosynthesis; isopentenyl diphosphate biosynthesis via DXP pathway; isopentenyl diphosphate from 1-deoxy-D-xylulose 5-phosphate: step 5/6. Converts 2C-methyl-D-erythritol 2,4-cyclodiphosphate (ME-2,4cPP) into 1-hydroxy-2-methyl-2-(E)-butenyl 4-diphosphate. This Buchnera aphidicola subsp. Acyrthosiphon pisum (strain APS) (Acyrthosiphon pisum symbiotic bacterium) protein is 4-hydroxy-3-methylbut-2-en-1-yl diphosphate synthase (flavodoxin).